The chain runs to 188 residues: UPF0398 protein ABC2016 (188 aa).

The protein belongs to the UPF0398 family.

The polypeptide is UPF0398 protein ABC2016 (Shouchella clausii (strain KSM-K16) (Alkalihalobacillus clausii)).